The primary structure comprises 131 residues: Structural protein ORF131 (131 aa).

The protein belongs to the viral ORF131/RIP family.

The protein localises to the virion. In Acidianus convivator (ATV), this protein is Structural protein ORF131.